Consider the following 211-residue polypeptide: Protein TMA23 (211 aa).

The interval 115-211 (ASFVVSSASS…SARRDRKEHI (97 aa)) is disordered. Residues 116–125 (SFVVSSASSS) are compositionally biased toward low complexity. Basic residues-rich tracts occupy residues 140–149 (VKRKKLKKDK), 158–176 (KKKKKKKSKKESKKGKKSK), and 185–197 (SKHKKSKKSKKHK). A compositionally biased stretch (basic and acidic residues) spans 198-211 (KEESSARRDRKEHI).

Forms homooligomers. Associates with ribosomal complexes.

The protein localises to the nucleus. The protein resides in the nucleolus. In terms of biological role, trans-acting factors of the ribosome biogenesis process. The protein is Protein TMA23 (TMA23) of Saccharomyces cerevisiae (strain ATCC 204508 / S288c) (Baker's yeast).